A 221-amino-acid polypeptide reads, in one-letter code: MANSESSSSPVNEEENSQRISTLHHQTMPSDLTQDEFTQLSQSIAEFHTYQLGNGRCSSLLAQRIHAPPETVWSVVRRFDRPQIYKHFIKSCNVSEDFEMRVGCTRDVNVISGLPANTSRERLDLLDDDRRVTGFSITGGEHRLRNYKSVTTVHRFEKEEEEERIWTVVLESYVVDVPEGNSEEDTRLFADTVIRLNLQKLASITEAMNRNNNNNNSSQVR.

Residues 1 to 11 (MANSESSSSPV) show a composition bias toward low complexity. Residues 1–22 (MANSESSSSPVNEEENSQRIST) form a disordered region. Alanine 2 is modified (N-acetylalanine). The tract at residues 50-206 (YQLGNGRCSS…NLQKLASITE (157 aa)) is START-like. Abscisate-binding positions include lysine 86, 116–121 (ANTSRE), 143–149 (RLRNYKS), and glutamate 171. The short motif at 112-116 (SGLPA) is the Gate loop element. A Latch loop motif is present at residues 142–144 (HRL).

Belongs to the PYR/PYL/RCAR abscisic acid intracellular receptor family. As to quaternary structure, homodimer. Binds ABA on one subunit only. Interacts with HAB1, ABI1 and ABI2, and possibly with other PP2Cs. Binds to CARs protein in an ABA-independent manner, both at the plasma membrane and in the nucleus. Interacts directly with CAR1 and CAR4.

It localises to the cytoplasm. It is found in the nucleus. Its subcellular location is the cell membrane. Receptor for abscisic acid (ABA) required for ABA-mediated responses such as stomatal closure and germination inhibition. Inhibits the activity of group-A protein phosphatases type 2C (PP2Cs) when activated by ABA. Can be activated by both (-)-ABA and (+)-ABA. The polypeptide is Abscisic acid receptor PYL1 (PYL1) (Arabidopsis thaliana (Mouse-ear cress)).